The following is a 193-amino-acid chain: uncharacterized protein (193 aa).

Arg-8 lines the substrate pocket. His-9 acts as the Tele-phosphohistidine intermediate in catalysis. Residues Asn-15, Gln-21, and Arg-58 each contribute to the substrate site. Glu-82 serves as the catalytic Proton donor/acceptor. His-139 contributes to the substrate binding site.

It belongs to the phosphoglycerate mutase family. GpmB subfamily.

In terms of biological role, phosphatase with broad substrate specificity. Does not have phosphoglycerate mutase activity. This is an uncharacterized protein from Bacillus subtilis (strain 168).